Here is a 353-residue protein sequence, read N- to C-terminus: Jasmonate-induced oxygenase 4 (353 aa).

The Fe2OG dioxygenase domain occupies valine 202–proline 302. Position 207 (arginine 207) interacts with jasmonate. Positions 209 and 211 each coordinate 2-oxoglutarate. 3 residues coordinate Fe cation: histidine 226, aspartate 228, and histidine 283. Positions 293 and 295 each coordinate 2-oxoglutarate. 2 residues coordinate jasmonate: arginine 332 and arginine 336.

It belongs to the iron/ascorbate-dependent oxidoreductase family. Requires L-ascorbate as cofactor. It depends on Fe(2+) as a cofactor.

The enzyme catalyses jasmonate + 2-oxoglutarate + O2 = (1R,2R)-12-hydroxyjasmonate + succinate + CO2. Its function is as follows. 2-oxoglutarate-dependent dioxygenase involved in the oxidation of jasmonate (JA), a stress-induced phytohormone synthesized in response to attack by pathogens and herbivores, which triggers the activation of defense responses via the JA-mediated signaling pathway. Converts JA to 12-hydroxyjasmonate (12OH-JA), an inactive form of JA. Is specific to free JA, and cannot oxidize the bioactive form jasmonoyl-L-isoleucine (JA-Ile) or other JA-amino acid conjugates. Prevents over-accumulation of JA and indirectly its bioactive form JA-Ile under stress response. Acts as a negative regulator of JA-mediated defense signaling, by contributing to 12OH-JA accumulation, which represses JA defense responses upon infection by the fungal pathogen Botrytis cinerea. Acts as a negative regulator of JA-mediated defense responses upon infestation by the herbivorous caterpillar Mamestra brassicae. The chain is Jasmonate-induced oxygenase 4 from Arabidopsis thaliana (Mouse-ear cress).